A 288-amino-acid polypeptide reads, in one-letter code: Quinate/shikimate dehydrogenase (288 aa).

Positions 71 and 107 each coordinate substrate. Residues 132–135, 155–158, K205, 232–235, and G255 each bind NAD(+); these read AGGA, NRRD, and CVYN.

It belongs to the shikimate dehydrogenase family. Homodimer.

The enzyme catalyses L-quinate + NAD(+) = 3-dehydroquinate + NADH + H(+). It carries out the reaction L-quinate + NADP(+) = 3-dehydroquinate + NADPH + H(+). It catalyses the reaction shikimate + NADP(+) = 3-dehydroshikimate + NADPH + H(+). The catalysed reaction is shikimate + NAD(+) = 3-dehydroshikimate + NADH + H(+). The protein operates within metabolic intermediate biosynthesis; chorismate biosynthesis; chorismate from D-erythrose 4-phosphate and phosphoenolpyruvate: step 4/7. Its function is as follows. The actual biological function of YdiB remains unclear, nor is it known whether 3-dehydroshikimate or quinate represents the natural substrate. Catalyzes the reversible NAD-dependent reduction of both 3-dehydroshikimate (DHSA) and 3-dehydroquinate to yield shikimate (SA) and quinate, respectively. It can use both NAD or NADP for catalysis, however it has higher catalytic efficiency with NAD. The sequence is that of Quinate/shikimate dehydrogenase from Escherichia coli (strain 55989 / EAEC).